An 85-amino-acid chain; its full sequence is Small ribosomal subunit protein eS27 (85 aa).

The C4-type zinc finger occupies 38–60; it reads CHGCRTITTVFSHAQNVVICSSC.

This sequence belongs to the eukaryotic ribosomal protein eS27 family. Zn(2+) serves as cofactor.

The sequence is that of Small ribosomal subunit protein eS27 (rps27) from Dictyostelium discoideum (Social amoeba).